The following is a 501-amino-acid chain: Phase 2 flagellin (501 aa).

This sequence belongs to the bacterial flagellin family.

It localises to the secreted. It is found in the bacterial flagellum. Its function is as follows. Flagellin is the subunit protein which polymerizes to form the filaments of bacterial flagella. This is Phase 2 flagellin (fljB) from Salmonella abortus-equi.